A 20-amino-acid polypeptide reads, in one-letter code: Putative serine protease (20 aa).

Belongs to the peptidase S1 family.

Its subcellular location is the secreted. In terms of biological role, binds the A.niger cell wall component alpha-1,3-glucan, a fungal pathogen-associated molecular pattern (PAMP) that activates the host immune response. This Galleria mellonella (Greater wax moth) protein is Putative serine protease.